The primary structure comprises 316 residues: uncharacterized protein (316 aa).

This is an uncharacterized protein from Caenorhabditis elegans.